The following is a 289-amino-acid chain: Ribosomal protein L11 methyltransferase (289 aa).

The S-adenosyl-L-methionine site is built by threonine 142, glycine 163, aspartate 185, and asparagine 226.

Belongs to the methyltransferase superfamily. PrmA family.

It localises to the cytoplasm. It catalyses the reaction L-lysyl-[protein] + 3 S-adenosyl-L-methionine = N(6),N(6),N(6)-trimethyl-L-lysyl-[protein] + 3 S-adenosyl-L-homocysteine + 3 H(+). Methylates ribosomal protein L11. The chain is Ribosomal protein L11 methyltransferase from Legionella pneumophila (strain Paris).